The sequence spans 479 residues: Alpha,alpha-trehalose-phosphate synthase [UDP-forming] 2 (479 aa).

Y96 and D150 together coordinate D-glucose 6-phosphate. R287 and K292 together coordinate UDP. Residues R287 and K292 each coordinate UDP-alpha-D-glucose. Position 325 (R325) interacts with D-glucose 6-phosphate. UDP contacts are provided by residues 363–364 and 390–394; these read SV and LVSFE. UDP-alpha-D-glucose is bound at residue 386-394; the sequence is DGMNLVSFE.

The protein belongs to the glycosyltransferase 20 family.

The catalysed reaction is D-glucose 6-phosphate + UDP-alpha-D-glucose = alpha,alpha-trehalose 6-phosphate + UDP + H(+). The protein operates within carbohydrate biosynthesis. Its function is as follows. Synthase catalytic subunit of the trehalose synthase complex that catalyzes the production of trehalose from glucose-6-phosphate and UDP-alpha-D-glucose in a two step process. The disaccharide trehalose serves as a storage carbohydrate that is mobilized during conidial germination. Regulates the level of trehalose as a protectant for cell integrity during thermal and oxidative stress. This Aspergillus fumigatus (strain ATCC MYA-4609 / CBS 101355 / FGSC A1100 / Af293) (Neosartorya fumigata) protein is Alpha,alpha-trehalose-phosphate synthase [UDP-forming] 2.